The sequence spans 248 residues: Probable S-methyl-5'-thioinosine phosphorylase (248 aa).

Phosphate is bound by residues Thr-12 and 54–55 (RH). Met-187 contributes to the substrate binding site. Position 188 (Thr-188) interacts with phosphate. 211–213 (NWA) contacts substrate.

Belongs to the PNP/MTAP phosphorylase family. MTAP subfamily. As to quaternary structure, homotrimer.

The catalysed reaction is S-methyl-5'-thioinosine + phosphate = 5-(methylsulfanyl)-alpha-D-ribose 1-phosphate + hypoxanthine. The protein operates within purine metabolism; purine nucleoside salvage. Its function is as follows. Catalyzes the reversible phosphorylation of S-methyl-5'-thioinosine (MTI) to hypoxanthine and 5-methylthioribose-1-phosphate. Involved in the breakdown of S-methyl-5'-thioadenosine (MTA), a major by-product of polyamine biosynthesis. Catabolism of (MTA) occurs via deamination to MTI and phosphorolysis to hypoxanthine. This chain is Probable S-methyl-5'-thioinosine phosphorylase, found in Xylella fastidiosa (strain Temecula1 / ATCC 700964).